A 197-amino-acid chain; its full sequence is Probable nicotinate-nucleotide adenylyltransferase (197 aa).

Belongs to the NadD family.

The catalysed reaction is nicotinate beta-D-ribonucleotide + ATP + H(+) = deamido-NAD(+) + diphosphate. It participates in cofactor biosynthesis; NAD(+) biosynthesis; deamido-NAD(+) from nicotinate D-ribonucleotide: step 1/1. Functionally, catalyzes the reversible adenylation of nicotinate mononucleotide (NaMN) to nicotinic acid adenine dinucleotide (NaAD). The protein is Probable nicotinate-nucleotide adenylyltransferase of Chlorobium phaeobacteroides (strain DSM 266 / SMG 266 / 2430).